We begin with the raw amino-acid sequence, 264 residues long: Zinc import ATP-binding protein ZnuC (264 aa).

The region spanning 20 to 235 is the ABC transporter domain; that stretch reads VQLKNIEVTF…PNFIHFFGDQ (216 aa). An ATP-binding site is contributed by 52 to 59; the sequence is GPNGGGKS.

The protein belongs to the ABC transporter superfamily. Zinc importer (TC 3.A.1.15.5) family. As to quaternary structure, the complex is composed of two ATP-binding proteins (ZnuC), two transmembrane proteins (ZnuB) and a solute-binding protein (ZnuA).

The protein localises to the cell inner membrane. It carries out the reaction Zn(2+)(out) + ATP(in) + H2O(in) = Zn(2+)(in) + ADP(in) + phosphate(in) + H(+)(in). Its function is as follows. Part of the ABC transporter complex ZnuABC involved in zinc import. Responsible for energy coupling to the transport system. This is Zinc import ATP-binding protein ZnuC from Haemophilus ducreyi (strain 35000HP / ATCC 700724).